Consider the following 431-residue polypeptide: Histidinol dehydrogenase (431 aa).

Positions 127, 189, and 212 each coordinate NAD(+). The substrate site is built by Ser-237, Gln-259, and His-262. 2 residues coordinate Zn(2+): Gln-259 and His-262. Active-site proton acceptor residues include Glu-326 and His-327. Substrate contacts are provided by His-327, Asp-360, Glu-414, and His-419. Asp-360 is a Zn(2+) binding site. Position 419 (His-419) interacts with Zn(2+).

This sequence belongs to the histidinol dehydrogenase family. Zn(2+) serves as cofactor.

It carries out the reaction L-histidinol + 2 NAD(+) + H2O = L-histidine + 2 NADH + 3 H(+). The protein operates within amino-acid biosynthesis; L-histidine biosynthesis; L-histidine from 5-phospho-alpha-D-ribose 1-diphosphate: step 9/9. Functionally, catalyzes the sequential NAD-dependent oxidations of L-histidinol to L-histidinaldehyde and then to L-histidine. This chain is Histidinol dehydrogenase, found in Xanthomonas euvesicatoria pv. vesicatoria (strain 85-10) (Xanthomonas campestris pv. vesicatoria).